Here is a 392-residue protein sequence, read N- to C-terminus: BURP domain protein RD22 (392 aa).

Positions 1–22 (MAIRLPLICLLGSFMVVAIAAD) are cleaved as a signal peptide. TXV repeat units lie at residues 56 to 58 (TNV), 78 to 80 (TAV), 100 to 102 (THV), and 125 to 127 (TDV). The segment at 57–164 (NVQVGKGGVN…PFVYNYAAKE (108 aa)) is 5 X approximate repeats. The tract at residues 61–136 (GKGGVNVNTH…VGVGKGGVTV (76 aa)) is disordered. Residues 94–114 (GKPGGGTHVSVGSGKGHGGGV) are compositionally biased toward gly residues. One can recognise a BURP domain in the interval 176–392 (FFLEKDLVRG…PETHVVWFSY (217 aa)).

As to expression, expressed in seed. Highest expression in leaves and guard cells.

Its function is as follows. Acts to suppress chlorophyll degradation under moisture stress. The sequence is that of BURP domain protein RD22 from Arabidopsis thaliana (Mouse-ear cress).